Reading from the N-terminus, the 249-residue chain is Basic leucine zipper 23 (249 aa).

The segment at 66–90 is disordered; it reads KVSTDDTSESSGKKRPLGNREAVRK. A bZIP domain is found at 74–121; sequence ESSGKKRPLGNREAVRKYREKKKAKAASLEDEVMRLKAVNNQLLKRLQ. Residues 78 to 98 are basic motif; it reads KKRPLGNREAVRKYREKKKAK. A leucine-zipper region spans residues 102-116; the sequence is LEDEVMRLKAVNNQL.

It localises to the nucleus. In terms of biological role, transcription factor involved in the response to zinc ion deficiency. Binds to the consensus sequence 5'-[AG]TGTCGACA[CT]-3' also called zinc deficiency response element (ZDRE). The ZDRE sequence is conserved in the plant kingdom and present in the promoters of genes that constitute the primary response to zinc deficiency, comprising additional ZIP metal transporter genes. Required for zinc accumulation in roots. Mediates the expression of the zinc transporter ZIP12 during growth in zinc-deficient conditions. ZIP12 transporter is involved in zinc uptake in roots. The polypeptide is Basic leucine zipper 23 (Arabidopsis thaliana (Mouse-ear cress)).